A 221-amino-acid polypeptide reads, in one-letter code: 2-amino-5-formylamino-6-ribosylaminopyrimidin-4(3H)-one 5'-monophosphate deformylase (221 aa).

4 residues coordinate Fe cation: E29, H31, D40, and H108.

This sequence belongs to the creatininase superfamily. FAPy deformylase family. Homodimer. Requires Fe(2+) as cofactor. It depends on Zn(2+) as a cofactor.

It carries out the reaction 2-amino-5-formylamino-6-(5-phospho-D-ribosylamino)pyrimidin-4(3H)-one + H2O = 2,5-diamino-6-(1-D-ribosylamino)pyrimidin-4(3H)-one 5'-phosphate + formate + H(+). The protein operates within cofactor biosynthesis; coenzyme F420 biosynthesis. It functions in the pathway cofactor biosynthesis; riboflavin biosynthesis. In terms of biological role, catalyzes the hydrolysis of the formamide of 2-amino-5-formylamino-6-ribosylamino-4(3H)-pyrimidinone 5'-monophosphate (FAPy) to form 2,5-diamino-6-ribosylamino-4(3H)-pyrimidinone 5'-phosphate (APy). The chain is 2-amino-5-formylamino-6-ribosylaminopyrimidin-4(3H)-one 5'-monophosphate deformylase from Methanococcus maripaludis (strain C7 / ATCC BAA-1331).